A 380-amino-acid polypeptide reads, in one-letter code: Cytochrome b (380 aa).

4 helical membrane-spanning segments follow: residues 34-54 (FGSL…LLAA), 78-99 (WLIR…YLHI), 114-134 (WNTG…GYVL), and 179-199 (FFTL…IHLT). Heme b-binding residues include His84 and His98. Positions 183 and 197 each coordinate heme b. His202 lines the a ubiquinone pocket. A run of 4 helical transmembrane segments spans residues 227–247 (LKDI…ALFS), 289–309 (LGGV…PLLH), 321–341 (FSQL…WVGS), and 348–368 (FIII…ILFP).

It belongs to the cytochrome b family. The cytochrome bc1 complex contains 11 subunits: 3 respiratory subunits (MT-CYB, CYC1 and UQCRFS1), 2 core proteins (UQCRC1 and UQCRC2) and 6 low-molecular weight proteins (UQCRH/QCR6, UQCRB/QCR7, UQCRQ/QCR8, UQCR10/QCR9, UQCR11/QCR10 and a cleavage product of UQCRFS1). This cytochrome bc1 complex then forms a dimer. It depends on heme b as a cofactor.

The protein resides in the mitochondrion inner membrane. Functionally, component of the ubiquinol-cytochrome c reductase complex (complex III or cytochrome b-c1 complex) that is part of the mitochondrial respiratory chain. The b-c1 complex mediates electron transfer from ubiquinol to cytochrome c. Contributes to the generation of a proton gradient across the mitochondrial membrane that is then used for ATP synthesis. The sequence is that of Cytochrome b (MT-CYB) from Antigone vipio (White-naped crane).